Reading from the N-terminus, the 399-residue chain is Phosphoglycerate kinase (399 aa).

Substrate contacts are provided by residues 22-24 (DFN), arginine 38, 61-64 (HLGR), arginine 120, and arginine 153. ATP-binding positions include lysine 206, glycine 297, glutamate 328, and 354 to 357 (GGDT).

The protein belongs to the phosphoglycerate kinase family. In terms of assembly, monomer.

The protein resides in the cytoplasm. It carries out the reaction (2R)-3-phosphoglycerate + ATP = (2R)-3-phospho-glyceroyl phosphate + ADP. It functions in the pathway carbohydrate degradation; glycolysis; pyruvate from D-glyceraldehyde 3-phosphate: step 2/5. The sequence is that of Phosphoglycerate kinase from Campylobacter concisus (strain 13826).